Consider the following 499-residue polypeptide: Anaerobic nitric oxide reductase flavorubredoxin (499 aa).

The segment at 30–210 is zinc metallo-hydrolase; sequence TKGTSYNSYL…PFSALVTAKI (181 aa). Histidine 79, glutamate 81, aspartate 83, histidine 147, aspartate 166, and histidine 227 together coordinate Fe cation. Positions 254–393 constitute a Flavodoxin-like domain; it reads ITLFYDSMSN…LCREHGQFIA (140 aa). Residues 260 to 264 and 342 to 369 each bind FMN; these read SMSNN and AFGSYGWNGGAVDRIHSRLTDAGFETAV. The Rubredoxin-like domain maps to 447 to 498; that stretch reads KQCMLCTVCNWVYDPEIGEPNQGVEPNTAWIDVPDYFLCPECNLGKDVFVEV. Fe cation is bound by residues cysteine 452, cysteine 455, cysteine 485, and cysteine 488.

The protein in the N-terminal section; belongs to the zinc metallo-hydrolase group 3 family. As to quaternary structure, homotetramer. Fe cation serves as cofactor. The cofactor is FMN.

It localises to the cytoplasm. The protein operates within nitrogen metabolism; nitric oxide reduction. Functionally, anaerobic nitric oxide reductase; uses NADH to detoxify nitric oxide (NO), protecting several 4Fe-4S NO-sensitive enzymes. Has at least 2 reductase partners, only one of which (NorW, flavorubredoxin reductase) has been identified. NO probably binds to the di-iron center; electrons enter from the NorW at rubredoxin and are transferred sequentially to the FMN center and the di-iron center. Also able to function as an aerobic oxygen reductase. This Aliivibrio salmonicida (strain LFI1238) (Vibrio salmonicida (strain LFI1238)) protein is Anaerobic nitric oxide reductase flavorubredoxin.